Consider the following 362-residue polypeptide: Caveolae-associated protein 4 (362 aa).

A disordered region spans residues 1-24 (MEHNGSASNAGKIHQNRLSSVTED). Residues 100 to 120 (IKDVKARVEKQQVRVTKVETK) are a coiled coil. A phosphoserine mark is found at S152, S171, and S172. Basic and acidic residues-rich tracts occupy residues 230-255 (RERL…ERFK), 275-289 (KAKD…VDRG), and 305-320 (HEFH…KEVT). Disordered regions lie at residues 230–289 (RERL…VDRG) and 305–346 (HEFH…KPQV). At Y324 the chain carries Phosphotyrosine. A Phosphothreonine modification is found at T334. A Phosphoserine modification is found at S353.

The protein belongs to the CAVIN family. As to quaternary structure, component of the CAVIN complex composed of CAVIN1, CAVIN2, CAVIN3 and CAVIN4. Interacts with CAVIN1. Interacts with CAVIN2; this augments the transactivation of NPPA. Interacts with CAV3, ADRA1A, ADRA1B, MAPK1 and MAPK3. As to expression, abundantly expressed in cardiac and skeletal muscle (at protein level). Weaker expression in aorta and lung. In heart, expressed in cardiomyocytes and vascular smooth muscle cells but not in other surrounding cells including vascular endothelial cells.

It is found in the cytoplasm. Its subcellular location is the myofibril. The protein resides in the sarcomere. It localises to the cytosol. The protein localises to the membrane. It is found in the caveola. Its subcellular location is the cell membrane. The protein resides in the sarcolemma. In terms of biological role, modulates the morphology of formed caveolae in cardiomyocytes, but is not required for caveolar formation. Facilitates the recruitment of MAPK1/3 to caveolae within cardiomyocytes and regulates alpha-1 adrenergic receptor-induced hypertrophic responses in cardiomyocytes through MAPK1/3 activation. Contributes to proper membrane localization and stabilization of caveolin-3 (CAV3) in cardiomyocytes. Induces RHOA activation and activates NPPA transcription and myofibrillar organization through the Rho/ROCK signaling pathway. This chain is Caveolae-associated protein 4 (Cavin4), found in Mus musculus (Mouse).